Reading from the N-terminus, the 467-residue chain is Fumarate hydratase class II (467 aa).

Residues 98-100, Arg126, 129-132, 139-141, and Thr187 contribute to the substrate site; these read SGT, HPND, and SSN. His188 serves as the catalytic Proton donor/acceptor. The active site involves Ser318. Substrate contacts are provided by residues Ser319 and 324-326; that span reads KVN.

It belongs to the class-II fumarase/aspartase family. Fumarase subfamily. As to quaternary structure, homotetramer.

Its subcellular location is the cytoplasm. It catalyses the reaction (S)-malate = fumarate + H2O. It functions in the pathway carbohydrate metabolism; tricarboxylic acid cycle; (S)-malate from fumarate: step 1/1. In terms of biological role, involved in the TCA cycle. Catalyzes the stereospecific interconversion of fumarate to L-malate. This chain is Fumarate hydratase class II, found in Shigella flexneri.